The following is a 40-amino-acid chain: Sapecin-C (40 aa).

3 cysteine pairs are disulfide-bonded: C3–C30, C16–C36, and C20–C38.

The protein belongs to the invertebrate defensin family. Type 1 subfamily. In terms of tissue distribution, hemocytes and fat body.

It localises to the secreted. Sapecins, which are potent bactericidal proteins, are produced in response to injury. Sapecin C is cytotoxic to Gram-positive bacteria. This Sarcophaga peregrina (Flesh fly) protein is Sapecin-C.